The sequence spans 81 residues: Defensin-like protein b (81 aa).

A signal peptide spans 1-26 (MRNATFFIVFYVFISLVLSNVQDVTA). Intrachain disulfides connect Cys31-Cys81, Cys42-Cys66, Cys50-Cys76, and Cys64-Cys78.

This sequence belongs to the DEFL family. As to expression, expressed in microspores and in young and mature anthers.

The protein resides in the secreted. Functionally, involved in self-incompatibility. In Arabidopsis lyrata (Lyre-leaved rock-cress), this protein is Defensin-like protein b (SCRb-1).